The following is a 402-amino-acid chain: Tryptophan synthase beta chain (402 aa).

Residue Lys88 is modified to N6-(pyridoxal phosphate)lysine.

Belongs to the TrpB family. Tetramer of two alpha and two beta chains. The cofactor is pyridoxal 5'-phosphate.

It carries out the reaction (1S,2R)-1-C-(indol-3-yl)glycerol 3-phosphate + L-serine = D-glyceraldehyde 3-phosphate + L-tryptophan + H2O. The protein operates within amino-acid biosynthesis; L-tryptophan biosynthesis; L-tryptophan from chorismate: step 5/5. Its function is as follows. The beta subunit is responsible for the synthesis of L-tryptophan from indole and L-serine. The chain is Tryptophan synthase beta chain (trpB) from Pasteurella multocida (strain Pm70).